The chain runs to 383 residues: MSWQDKIAQGLQRRRDAAAYRTRQVNEGANGRWLQSGERQYLNFSSNDYLGLSQNDEVIAAWQQGARRYGVGSGGSGHVTGYSQPHARLEQRLADWLGYPRALLFISGYAANQAVLTALTDADDRILADKLSHASLLEAAAHSPAQLRRFQHNQPEALQNLLIKPCQGQTLVVTEGVFSMDGDSAPLAALQQQTSAAGGWLLVDDAHGIGVHGEEGRGSCWLQGVQPELLVVTFGKAFGLSGAAVLCQEPVAEYLLQYARHLIYSTAMPPAQACALQAALRQVQQGDALRQQLQQRIRQFRTAAAHLPLQLGASKTAIQPLLVGDNQQSLIWAEQLRAAGLWVTAIRPPTVPPGSARLRITLSAAHQPEDIDRLLEVLYGLCH.

Arg21 is a substrate binding site. 108–109 contacts pyridoxal 5'-phosphate; it reads GY. His133 contributes to the substrate binding site. Pyridoxal 5'-phosphate-binding residues include Ser179, His207, and Thr233. At Lys236 the chain carries N6-(pyridoxal phosphate)lysine. Thr350 lines the substrate pocket.

This sequence belongs to the class-II pyridoxal-phosphate-dependent aminotransferase family. BioF subfamily. Homodimer. Requires pyridoxal 5'-phosphate as cofactor.

It carries out the reaction 6-carboxyhexanoyl-[ACP] + L-alanine + H(+) = (8S)-8-amino-7-oxononanoate + holo-[ACP] + CO2. It functions in the pathway cofactor biosynthesis; biotin biosynthesis. Catalyzes the decarboxylative condensation of pimeloyl-[acyl-carrier protein] and L-alanine to produce 8-amino-7-oxononanoate (AON), [acyl-carrier protein], and carbon dioxide. The protein is 8-amino-7-oxononanoate synthase of Yersinia pseudotuberculosis serotype O:1b (strain IP 31758).